A 531-amino-acid chain; its full sequence is Poly(A)-specific ribonuclease PNLDC1 (531 aa).

Residues D28, E30, D271, and D365 each contribute to the Mg(2+) site. Residues 506–526 form a helical membrane-spanning segment; the sequence is ITCLLQVCSIVTTWAMIAFLL.

It belongs to the CAF1 family. The cofactor is Mg(2+). Specifically expressed in embryonic stem cells. Highly expressed in testis.

The protein localises to the endoplasmic reticulum membrane. It catalyses the reaction Exonucleolytic cleavage of poly(A) to 5'-AMP.. In terms of biological role, 3'-exoribonuclease that has a preference for poly(A) tails of mRNAs, thereby efficiently degrading poly(A) tails. Exonucleolytic degradation of the poly(A) tail is often the first step in the decay of eukaryotic mRNAs and is also used to silence certain maternal mRNAs translationally during oocyte maturation and early embryonic development. May act as a regulator of multipotency in embryonic stem cells. Is a critical factor for proper spermatogenesis, involved in pre-piRNAs processing to generate mature piRNAs. The polypeptide is Poly(A)-specific ribonuclease PNLDC1 (Mus musculus (Mouse)).